A 498-amino-acid chain; its full sequence is MTYLLALDQGTSSSRSIVFDTQGRIVASAQLELPQIYPRPGWVEHDPREIWRTQLATAREALAKAGLAAADIRALGITNQRETTVVWNRATGQPIHHAIVWQDRRAEPLCAQLREAGHADTIQRKTGLLIDAYFSGTKLRWILDNVNGARAAAERGELAFGTVDSWLIWQLTGGRRHVTDVSNASRTMLFNVHTNQWDDDLLALLEIPRALMPEVLPSAADFGRTAAEVLGGEIAIGGVAGDQQSALFGQACFSAGMAKNTYGTGCFMLMHTGGVFQTSANGLLTTAAAQPTAAPAYALEGSVFVGGAVVQWLRDGLRAIEHSGQVQQLAESVPDSGGVMMVPAFTGLGAPYWKPDARGTITGLTRGTTIAHIARAALESIAFQSAALLLAMSRDAVASGGAPVSELRVDGGACVNNLLMQFQADLLGIPVVRPACVETTALGAAYLAGLSSGVYQSTEELSALWKAERRFVPTLDKHRADELMARWEHAVAQTALAA.

Residue threonine 11 participates in ADP binding. ATP is bound by residues threonine 11, serine 12, and serine 13. Residue threonine 11 participates in sn-glycerol 3-phosphate binding. An ADP-binding site is contributed by arginine 15. Sn-glycerol 3-phosphate-binding residues include arginine 81, glutamate 82, tyrosine 133, and aspartate 242. Glycerol is bound by residues arginine 81, glutamate 82, tyrosine 133, aspartate 242, and glutamine 243. Residues threonine 264 and glycine 307 each contribute to the ADP site. 4 residues coordinate ATP: threonine 264, glycine 307, glutamine 311, and glycine 412. ADP contacts are provided by glycine 412 and asparagine 416.

This sequence belongs to the FGGY kinase family.

The catalysed reaction is glycerol + ATP = sn-glycerol 3-phosphate + ADP + H(+). It functions in the pathway polyol metabolism; glycerol degradation via glycerol kinase pathway; sn-glycerol 3-phosphate from glycerol: step 1/1. Its activity is regulated as follows. Inhibited by fructose 1,6-bisphosphate (FBP). Its function is as follows. Key enzyme in the regulation of glycerol uptake and metabolism. Catalyzes the phosphorylation of glycerol to yield sn-glycerol 3-phosphate. In Delftia acidovorans (strain DSM 14801 / SPH-1), this protein is Glycerol kinase.